We begin with the raw amino-acid sequence, 298 residues long: Cation-efflux pump FieF (298 aa).

A helical membrane pass occupies residues 24–44 (LLIKIFAWWYTGSVSILAALV). Asp-45 and Asp-49 together coordinate Zn(2+). Transmembrane regions (helical) follow at residues 80-100 (SLAALAQSMFISGSALFLTSI) and 112-132 (PGVGIGVTVIALICTIILVTF). Residues His-151 and Asp-155 each coordinate Zn(2+). A run of 2 helical transmembrane segments spans residues 154-174 (SDVMMNGAILIALGLSWYGWH) and 176-196 (ADALFALGIGIYILYSALRMG).

The protein belongs to the cation diffusion facilitator (CDF) transporter (TC 2.A.4) family. FieF subfamily. In terms of assembly, homodimer.

Its subcellular location is the cell inner membrane. It catalyses the reaction Zn(2+)(in) + H(+)(out) = Zn(2+)(out) + H(+)(in). The catalysed reaction is Cd(2+)(in) + H(+)(out) = Cd(2+)(out) + H(+)(in). It carries out the reaction Fe(2+)(in) + H(+)(out) = Fe(2+)(out) + H(+)(in). Its function is as follows. Divalent metal cation transporter which exports Zn(2+), Cd(2+) and possibly Fe(2+). May be involved in zinc and iron detoxification by efflux. This is Cation-efflux pump FieF from Salmonella typhi.